Here is an 88-residue protein sequence, read N- to C-terminus: ATP synthase F(0) complex subunit f, mitochondrial (88 aa).

At A2 the chain carries N-acetylalanine. At S3 the chain carries Phosphoserine. N6-acetyllysine is present on K16. The helical transmembrane segment at M62–L79 threads the bilayer.

In terms of assembly, component of the ATP synthase complex composed at least of ATP5F1A/subunit alpha, ATP5F1B/subunit beta, ATP5MC1/subunit c (homooctomer), MT-ATP6/subunit a, MT-ATP8/subunit 8, ATP5ME/subunit e, ATP5MF/subunit f, ATP5MG/subunit g, ATP5MK/subunit k, ATP5MJ/subunit j, ATP5F1C/subunit gamma, ATP5F1D/subunit delta, ATP5F1E/subunit epsilon, ATP5PF/subunit F6, ATP5PB/subunit b, ATP5PD/subunit d, ATP5PO/subunit OSCP. ATP synthase complex consists of a soluble F(1) head domain (subunits alpha(3) and beta(3)) - the catalytic core - and a membrane F(0) domain - the membrane proton channel (subunits c, a, 8, e, f, g, k and j). These two domains are linked by a central stalk (subunits gamma, delta, and epsilon) rotating inside the F1 region and a stationary peripheral stalk (subunits F6, b, d, and OSCP).

It localises to the mitochondrion. Its subcellular location is the mitochondrion inner membrane. Functionally, subunit f, of the mitochondrial membrane ATP synthase complex (F(1)F(0) ATP synthase or Complex V) that produces ATP from ADP in the presence of a proton gradient across the membrane which is generated by electron transport complexes of the respiratory chain. ATP synthase complex consist of a soluble F(1) head domain - the catalytic core - and a membrane F(1) domain - the membrane proton channel. These two domains are linked by a central stalk rotating inside the F(1) region and a stationary peripheral stalk. During catalysis, ATP synthesis in the catalytic domain of F(1) is coupled via a rotary mechanism of the central stalk subunits to proton translocation. In vivo, can only synthesize ATP although its ATP hydrolase activity can be activated artificially in vitro. Part of the complex F(0) domain. The protein is ATP synthase F(0) complex subunit f, mitochondrial of Bos taurus (Bovine).